The chain runs to 480 residues: Thiamine biosynthesis bifunctional protein ThiM/ThiE (480 aa).

The interval 1-287 (MSTLPERVRE…LYVLVSGATP (287 aa)) is hydroxyethylthiazole kinase. Met-40 is a binding site for 5-(2-hydroxyethyl)-4-methylthiazole. ATP is bound by residues Arg-116 and Thr-164. Gly-191 is a 5-(2-hydroxyethyl)-4-methylthiazole binding site. The interval 288–480 (PDVLEAVLQA…VRRAKGEVSA (193 aa)) is thiamine-phosphate synthase. 4-amino-2-methyl-5-(diphosphooxymethyl)pyrimidine-binding positions include 303–307 (QFREK) and Asn-335. Residues Asp-336 and Asp-355 each coordinate Mg(2+). Thr-374 provides a ligand contact to 4-amino-2-methyl-5-(diphosphooxymethyl)pyrimidine. Residue 400 to 402 (TPS) participates in 2-[(2R,5Z)-2-carboxy-4-methylthiazol-5(2H)-ylidene]ethyl phosphate binding. Lys-403 contributes to the 4-amino-2-methyl-5-(diphosphooxymethyl)pyrimidine binding site. Residues Gly-431 and 451–452 (IS) contribute to the 2-[(2R,5Z)-2-carboxy-4-methylthiazol-5(2H)-ylidene]ethyl phosphate site.

It in the N-terminal section; belongs to the Thz kinase family. The protein in the C-terminal section; belongs to the thiamine-phosphate synthase family. It depends on Mg(2+) as a cofactor.

It catalyses the reaction 5-(2-hydroxyethyl)-4-methylthiazole + ATP = 4-methyl-5-(2-phosphooxyethyl)-thiazole + ADP + H(+). The catalysed reaction is 2-[(2R,5Z)-2-carboxy-4-methylthiazol-5(2H)-ylidene]ethyl phosphate + 4-amino-2-methyl-5-(diphosphooxymethyl)pyrimidine + 2 H(+) = thiamine phosphate + CO2 + diphosphate. It carries out the reaction 2-(2-carboxy-4-methylthiazol-5-yl)ethyl phosphate + 4-amino-2-methyl-5-(diphosphooxymethyl)pyrimidine + 2 H(+) = thiamine phosphate + CO2 + diphosphate. The enzyme catalyses 4-methyl-5-(2-phosphooxyethyl)-thiazole + 4-amino-2-methyl-5-(diphosphooxymethyl)pyrimidine + H(+) = thiamine phosphate + diphosphate. The protein operates within cofactor biosynthesis; thiamine diphosphate biosynthesis; 4-methyl-5-(2-phosphoethyl)-thiazole from 5-(2-hydroxyethyl)-4-methylthiazole: step 1/1. It participates in cofactor biosynthesis; thiamine diphosphate biosynthesis; thiamine phosphate from 4-amino-2-methyl-5-diphosphomethylpyrimidine and 4-methyl-5-(2-phosphoethyl)-thiazole: step 1/1. Functionally, condenses 4-methyl-5-(beta-hydroxyethyl)thiazole monophosphate (THZ-P) and 2-methyl-4-amino-5-hydroxymethyl pyrimidine pyrophosphate (HMP-PP) to form thiamine monophosphate (TMP). This chain is Thiamine biosynthesis bifunctional protein ThiM/ThiE (thiM/thiE), found in Symbiobacterium thermophilum (strain DSM 24528 / JCM 14929 / IAM 14863 / T).